Consider the following 176-residue polypeptide: MTTIVSVRRNGKVVMGGDGQVSLGNTVMKGNAKKVRRLYHGQVIAGFAGATADAFTLFERFEGQLEKHQGHLVRAAVELAKEWRTDRSLSRLEAMLAVANKDASLIITGNGDVVEPEDGLIAMGSGGAYAQAAARALLNKTDLSAREIAETALNIAGDICVFTNHNLTIEEQDLAD.

Thr2 is a catalytic residue. Gly157, Cys160, and Thr163 together coordinate Na(+).

The protein belongs to the peptidase T1B family. HslV subfamily. As to quaternary structure, a double ring-shaped homohexamer of HslV is capped on each side by a ring-shaped HslU homohexamer. The assembly of the HslU/HslV complex is dependent on binding of ATP.

The protein resides in the cytoplasm. The catalysed reaction is ATP-dependent cleavage of peptide bonds with broad specificity.. With respect to regulation, allosterically activated by HslU binding. Its function is as follows. Protease subunit of a proteasome-like degradation complex believed to be a general protein degrading machinery. In Pseudomonas putida (strain ATCC 47054 / DSM 6125 / CFBP 8728 / NCIMB 11950 / KT2440), this protein is ATP-dependent protease subunit HslV.